Consider the following 133-residue polypeptide: MTYEILDHESDIGIMVYGTTYEELFSNAVYAMADLILDVGKLKEKRKMHEIIRGNTPEDIMVNLLSRVLFYVDTYYTLYFRATCKYEDSTLDVYLYGSEIPEEVEYRNVIKAVTYSEIAVKPEDGFARVIFDL.

Ca(2+)-binding residues include aspartate 11, aspartate 132, and leucine 133.

This sequence belongs to the archease family.

Activates the tRNA-splicing ligase complex by facilitating the enzymatic turnover of catalytic subunit RtcB. Acts by promoting the guanylylation of RtcB, a key intermediate step in tRNA ligation. Can also alter the NTP specificity of RtcB such that ATP, dGTP or ITP is used efficiently. The chain is Protein archease from Thermoplasma volcanium (strain ATCC 51530 / DSM 4299 / JCM 9571 / NBRC 15438 / GSS1).